The primary structure comprises 355 residues: Alanine racemase (355 aa).

Lys-37 serves as the catalytic Proton acceptor; specific for D-alanine. Position 37 is an N6-(pyridoxal phosphate)lysine (Lys-37). Residue Arg-129 participates in substrate binding. Tyr-251 acts as the Proton acceptor; specific for L-alanine in catalysis. Met-299 is a substrate binding site.

The protein belongs to the alanine racemase family. The cofactor is pyridoxal 5'-phosphate.

It catalyses the reaction L-alanine = D-alanine. The protein operates within amino-acid biosynthesis; D-alanine biosynthesis; D-alanine from L-alanine: step 1/1. Functionally, catalyzes the interconversion of L-alanine and D-alanine. May also act on other amino acids. This is Alanine racemase (alr) from Deinococcus geothermalis (strain DSM 11300 / CIP 105573 / AG-3a).